Consider the following 132-residue polypeptide: MSLSDPIANFLTSIRNGQLSMNKVIVVSYSYVIHAILQILLSEGYIDGFTEKSKSSSIKFFEVKLKYYNGAPVISQIARISKPGKRCYCSAKDMPKFYNGLGLYIISTSKGIMSDYNARKAGVGGEILCGVF.

Belongs to the universal ribosomal protein uS8 family. In terms of assembly, part of the 30S ribosomal subunit. Contacts proteins S5 and S12.

In terms of biological role, one of the primary rRNA binding proteins, it binds directly to 16S rRNA central domain where it helps coordinate assembly of the platform of the 30S subunit. The sequence is that of Small ribosomal subunit protein uS8 from Ehrlichia canis (strain Jake).